A 205-amino-acid chain; its full sequence is CASP-like protein 0U1 (205 aa).

Over 1 to 66 (MSGGDIDPTA…GYHKFAVFQF (66 aa)) the chain is Cytoplasmic. Residues 10–162 (AINSPKFRLI…SMMFTWKEWR (153 aa)) form the MARVEL domain. A helical membrane pass occupies residues 67-87 (LVVICVTYWLFTMLWMGMYLI). Residues 88–90 (QKV) are Extracellular-facing. The helical transmembrane segment at 91-111 (PPAGTEFMIYAVFNVLILIAF) threads the bilayer. The Cytoplasmic segment spans residues 112 to 137 (STSWTECNETIVDPTYPVCKRATGAK). Residues 138–158 (ASIAFAMFTWLALCVSMMFTW) traverse the membrane as a helical segment. The Extracellular portion of the chain corresponds to 159–167 (KEWRDQNYE). A helical transmembrane segment spans residues 168–188 (GLPIFGDFSSFMPGGGGGGMG). At 189 to 205 (GGGGYERPSDVNTQTYA) the chain is on the cytoplasmic side.

It belongs to the Casparian strip membrane proteins (CASP) family. As to quaternary structure, homodimer and heterodimers.

It is found in the cell membrane. The polypeptide is CASP-like protein 0U1 (Micromonas pusilla (strain CCMP1545) (Picoplanktonic green alga)).